A 231-amino-acid chain; its full sequence is Sugar fermentation stimulation protein homolog (231 aa).

It belongs to the SfsA family.

This is Sugar fermentation stimulation protein homolog from Syntrophotalea carbinolica (strain DSM 2380 / NBRC 103641 / GraBd1) (Pelobacter carbinolicus).